A 622-amino-acid polypeptide reads, in one-letter code: UvrABC system protein C (622 aa).

Residues 13-92 enclose the GIY-YIG domain; sequence EKPGVYLMKN…IKKYRPKYNI (80 aa). Residues 204–239 enclose the UVR domain; sequence KDILDKLKNQMEEASNSLQFEKAASLRDKIFAVKKI.

Belongs to the UvrC family. Interacts with UvrB in an incision complex.

It is found in the cytoplasm. The UvrABC repair system catalyzes the recognition and processing of DNA lesions. UvrC both incises the 5' and 3' sides of the lesion. The N-terminal half is responsible for the 3' incision and the C-terminal half is responsible for the 5' incision. The sequence is that of UvrABC system protein C from Clostridium tetani (strain Massachusetts / E88).